The sequence spans 691 residues: MSGLQSVDWQIASNRQAHHTERFYGKDLLVRRGQLFQVSLTLSQGLSSGGRVTFTASTGPYPSESANTKAVFPLSNGTSSSGWGAQLVSSRNNVLNISILSPANAPIGRYTLNMQISSQGSDSTLKLGTFILLFNPWLQADSVFMSNHAEREEYVQEDAGIIFVGSTNRISMIGWNYGQFEEGILNICLSVLDNSLNFRRDPATDVAHRNDPKYVGRVLSAMINGNDDSGVISGNWSGSYTGGRDPRNWNGSVEILKEWQRSGFRPVRYGQCWVFAGTLNTVLRCLGIPSRVITNFNSAHDTDQNLSVDVYYDPLGRPMDKGSDSVWNFHVWNEAWFVRSDLGPSYNGWQVLDATPQERSQGVFQCGPASVIAIREGNVDWDFDMPFIFAEVNADRITWIYESNGALKKNSADTHSVGKHISTKAVGSNSRMDVTEKYKYPEGSSQERQVFEKALRKLKPTMSFSATSASSLAREEREPSISGRFKVAGVLTVGKEVNLILMLKNLTSDTKTVTVNMTAWTIVYNGTLVHEVWKDSVTKSLNPEEEIEHPVKIAYAQYEKYLKADNMIRTTAVCQVTDEPEVVVERDIILDNPTLTLEVLDEARVQKPVNVQMLFSNPLDEPVKDCVLMVEGSGLLLGNLKIDVPALRPKERSRVRFEILPTRSGTKQLLANFSCNKFPAIKAMLSVDVAE.

Phosphotyrosine is present on tyrosine 110. Position 111 is a phosphothreonine (threonine 111). Positions 221, 224, 226, and 227 each coordinate Ca(2+). Cysteine 272 is an active-site residue. The Ca(2+) site is built by aspartate 301, aspartate 303, asparagine 305, serine 307, and aspartate 324. Active-site residues include histidine 330 and aspartate 353. Ca(2+) contacts are provided by asparagine 393, threonine 414, glutamate 442, and glutamate 447.

It belongs to the transglutaminase superfamily. Transglutaminase family. As to quaternary structure, consists of two polypeptide chains, which are synthesized as a precursor form of a single polypeptide. It depends on Ca(2+) as a cofactor. In terms of processing, activated by proteolytic processing. In vitro activation is commonly achieved by cleavage with dispase, a neutral bacterial protease. Physiological activation may be catalyzed by CTSL and, to a lesser extent, by CTSS.

Its subcellular location is the cytoplasm. It carries out the reaction L-glutaminyl-[protein] + L-lysyl-[protein] = [protein]-L-lysyl-N(6)-5-L-glutamyl-[protein] + NH4(+). Functionally, catalyzes the calcium-dependent formation of isopeptide cross-links between glutamine and lysine residues in various proteins, as well as the conjugation of polyamines to proteins. Involved in the formation of the cornified envelope (CE), a specialized component consisting of covalent cross-links of proteins beneath the plasma membrane of terminally differentiated keratinocytes. Catalyzes small proline-rich proteins and LOR cross-linking to form small interchain oligomers, which are further cross-linked by TGM1 onto the growing CE scaffold. In hair follicles, involved in cross-linking structural proteins to hardening the inner root sheath. This chain is Protein-glutamine gamma-glutamyltransferase E (TGM3), found in Bos taurus (Bovine).